Here is a 107-residue protein sequence, read N- to C-terminus: N(4)-acetylcytidine amidohydrolase (107 aa).

The 97-residue stretch at 6 to 102 (TFYRRFQADI…RLYVISFSLV (97 aa)) folds into the ASCH domain. Lys-20 functions as the Proton acceptor in the catalytic mechanism. Catalysis depends on Thr-23, which acts as the Nucleophile. The active-site Proton donor is the Glu-73.

This sequence belongs to the N(4)-acetylcytidine amidohydrolase family.

The enzyme catalyses N(4)-acetylcytidine + H2O = cytidine + acetate + H(+). It carries out the reaction N(4)-acetyl-2'-deoxycytidine + H2O = 2'-deoxycytidine + acetate + H(+). It catalyses the reaction N(4)-acetylcytosine + H2O = cytosine + acetate + H(+). Its function is as follows. Catalyzes the hydrolysis of N(4)-acetylcytidine (ac4C). The chain is N(4)-acetylcytidine amidohydrolase from Edwardsiella ictaluri (strain 93-146).